Here is a 458-residue protein sequence, read N- to C-terminus: Ribosomal protein uS12 methylthiotransferase RimO (458 aa).

The region spanning 8 to 119 (PTVAFAHLGC…IVDVLQRVEV (112 aa)) is the MTTase N-terminal domain. Cysteine 17, cysteine 53, cysteine 82, cysteine 157, cysteine 161, and cysteine 164 together coordinate [4Fe-4S] cluster. The Radical SAM core domain occupies 143–372 (TTDQAVAFLK…MALQQPISAE (230 aa)). The region spanning 375–446 (SRWVGRTVDV…IYDLNGQMVG (72 aa)) is the TRAM domain.

This sequence belongs to the methylthiotransferase family. RimO subfamily. [4Fe-4S] cluster serves as cofactor.

Its subcellular location is the cytoplasm. The enzyme catalyses L-aspartate(89)-[ribosomal protein uS12]-hydrogen + (sulfur carrier)-SH + AH2 + 2 S-adenosyl-L-methionine = 3-methylsulfanyl-L-aspartate(89)-[ribosomal protein uS12]-hydrogen + (sulfur carrier)-H + 5'-deoxyadenosine + L-methionine + A + S-adenosyl-L-homocysteine + 2 H(+). Catalyzes the methylthiolation of an aspartic acid residue of ribosomal protein uS12. In Synechococcus sp. (strain CC9605), this protein is Ribosomal protein uS12 methylthiotransferase RimO.